The chain runs to 237 residues: Phosphoadenosine 5'-phosphosulfate reductase (237 aa).

C231 functions as the Nucleophile; cysteine thiosulfonate intermediate in the catalytic mechanism.

It belongs to the PAPS reductase family. CysH subfamily.

It localises to the cytoplasm. It catalyses the reaction [thioredoxin]-disulfide + sulfite + adenosine 3',5'-bisphosphate + 2 H(+) = [thioredoxin]-dithiol + 3'-phosphoadenylyl sulfate. It participates in sulfur metabolism; hydrogen sulfide biosynthesis; sulfite from sulfate: step 3/3. Its function is as follows. Catalyzes the formation of sulfite from phosphoadenosine 5'-phosphosulfate (PAPS) using thioredoxin as an electron donor. The protein is Phosphoadenosine 5'-phosphosulfate reductase of Xylella fastidiosa (strain 9a5c).